The sequence spans 330 residues: Polygalacturonase inhibitor 2 (330 aa).

The first 21 residues, 1–21 (MDKTMTLFLLLSTLLLTTSLA), serve as a signal peptide directing secretion. 2 cysteine pairs are disulfide-bonded: C25-C55 and C56-C63. 10 LRR repeats span residues 69–93 (NHRV…VGDL), 94–117 (PYLT…TIAK), 118–141 (LKNL…FLSQ), 142–166 (LKNL…LSSL), 167–192 (RKLE…TFSG), 194–215 (VPSL…LGNP), 217–237 (FYRI…LFGA), 238–260 (KKTT…KVKL), 261–285 (AKTL…WSKA), and 287–308 (FQLL…EYIQ). N-linked (GlcNAc...) asparagine glycans are attached at residues N106, N120, and N130. Residue N291 is glycosylated (N-linked (GlcNAc...) asparagine). Cystine bridges form between C298–C320 and C322–C329.

The protein belongs to the polygalacturonase-inhibiting protein family.

It is found in the secreted. The protein localises to the cell wall. The protein resides in the membrane. Its function is as follows. Inhibitor of fungal polygalacturonase. It is an important factor for plant resistance to phytopathogenic fungi. The sequence is that of Polygalacturonase inhibitor 2 (PGIP2) from Arabidopsis thaliana (Mouse-ear cress).